The chain runs to 403 residues: S-adenosylmethionine synthase (403 aa).

An ATP-binding site is contributed by 140–145 (GKGSTD).

It belongs to the AdoMet synthase 2 family. Requires Mg(2+) as cofactor.

It catalyses the reaction L-methionine + ATP + H2O = S-adenosyl-L-methionine + phosphate + diphosphate. It functions in the pathway amino-acid biosynthesis; S-adenosyl-L-methionine biosynthesis; S-adenosyl-L-methionine from L-methionine: step 1/1. Its function is as follows. Catalyzes the formation of S-adenosylmethionine from methionine and ATP. The polypeptide is S-adenosylmethionine synthase (Sulfolobus acidocaldarius (strain ATCC 33909 / DSM 639 / JCM 8929 / NBRC 15157 / NCIMB 11770)).